Here is a 500-residue protein sequence, read N- to C-terminus: Inner membrane transporter YjeM (500 aa).

At 1–10 (MTHTIKKMSL) the chain is on the cytoplasmic side. The helical transmembrane segment at 11-31 (IGLILMIFTSVFGFANSPSAF) threads the bilayer. The Periplasmic segment spans residues 32–37 (YLMGYS). The helical transmembrane segment at 38–58 (AIPWYIFSALLFFIPFALMMA) threads the bilayer. Residues 59-83 (EMGSAYRKEEGGIYSWMNNSVGPRY) are Cytoplasmic-facing. A helical transmembrane segment spans residues 84–104 (AFIGTFMWFSSYVIWMVSTAA). Over 105-124 (KIWVPFSTFVFGADMTQHWR) the chain is Periplasmic. Residues 125–145 (IAGLEPTQVVGLLAVGWMILV) traverse the membrane as a helical segment. Residues 146–163 (TCVAARGINKIARITAVG) are Cytoplasmic-facing. A helical membrane pass occupies residues 164–184 (GIAVMCLNLVLLLVSVAILLL). At 185–209 (NGGHFAQEINFTSSPNPGYHSGLAM) the chain is on the periplasmic side. Residues 210–230 (LSFVVFAIFAYGGIEAVGGLV) form a helical membrane-spanning segment. Residues 231–243 (DKTEKPEKNFAKG) lie on the Cytoplasmic side of the membrane. A helical transmembrane segment spans residues 244-264 (IVFAAIVISIGYSLAIFLWGV). At 265-308 (STNWQQILSNSAVNLGNITYILMSSLGTTLGNALNLSPEAAMTV) the chain is on the periplasmic side. A helical membrane pass occupies residues 309 to 329 (GVWFARITGLSMFLAYTGAFF). The Cytoplasmic segment spans residues 330–361 (TLSYSPLKAIIQGTPKALWPAPMTTLNANGMP). The chain crosses the membrane as a helical span at residues 362–382 (ATAMWLQCVLVSLFILLVSFG). Over 383–394 (GDTASAFYNKLT) the chain is Periplasmic. The chain crosses the membrane as a helical span at residues 395–415 (LMANVSMTLPYLFLALAFPFF). Residues 416 to 433 (KARQDLERPFVLFKTKAS) are Cytoplasmic-facing. The chain crosses the membrane as a helical span at residues 434 to 454 (TLVATGVVVLVVTFANVFTII). Over 455–462 (QPVIEAGD) the chain is Periplasmic. Residues 463–483 (WDSALWMIGGPIFFSLLAMAI) form a helical membrane-spanning segment. The Cytoplasmic segment spans residues 484–500 (YQNYSSRMSADPEWAAE).

It belongs to the amino acid-polyamine-organocation (APC) superfamily.

It is found in the cell inner membrane. The sequence is that of Inner membrane transporter YjeM (yjeM) from Salmonella typhi.